Consider the following 510-residue polypeptide: Beta-glucosidase 12 (510 aa).

The N-terminal stretch at 1 to 24 is a signal peptide; that stretch reads MAAAGAMPGGLLLTFLLLAVVASG. Position 53 (Gln53) interacts with a beta-D-glucoside. A glycan (N-linked (GlcNAc...) asparagine) is linked at Asn122. Residues His157 and 202 to 203 each bind a beta-D-glucoside; that span reads NE. Catalysis depends on Glu203, which acts as the Proton donor. 2 disulfide bridges follow: Cys208–Cys243 and Cys222–Cys230. Asn229 carries an N-linked (GlcNAc...) asparagine glycan. Tyr346 provides a ligand contact to a beta-D-glucoside. Residues Asn361 and Asn371 are each glycosylated (N-linked (GlcNAc...) asparagine). Residue Glu417 participates in a beta-D-glucoside binding. The active-site Nucleophile is the Glu417. Asn425 carries N-linked (GlcNAc...) asparagine glycosylation. A beta-D-glucoside-binding positions include Trp466, 473-474, and Phe482; that span reads EW.

It belongs to the glycosyl hydrolase 1 family.

The protein localises to the secreted. It carries out the reaction Hydrolysis of terminal, non-reducing beta-D-glucosyl residues with release of beta-D-glucose.. Its function is as follows. Hydrolyzes p-nitrophenyl beta-D-glucoside, p-nitrophenyl beta-D-galactoside, p-nitrophenyl beta-D-xyloside, p-nitrophenyl beta-D-fucoside, p-nitrophenyl beta-L-arabinoside, cello-oligosaccharides and laminaribiose. In Oryza sativa subsp. japonica (Rice), this protein is Beta-glucosidase 12.